We begin with the raw amino-acid sequence, 98 residues long: Large ribosomal subunit protein bL28 (98 aa).

Belongs to the bacterial ribosomal protein bL28 family.

The chain is Large ribosomal subunit protein bL28 from Rhizobium etli (strain ATCC 51251 / DSM 11541 / JCM 21823 / NBRC 15573 / CFN 42).